A 467-amino-acid chain; its full sequence is MKSQTIPTRRVRGFRRAAVIRQLLSRDKTPLTILLLASLTGVLAGLAGVAFEKAVAWVTAHRIEGLAQVAHIPWLVWLLAFLFSALLAMVGYFLVRRFAPEAGGSGIPEIEGALEELRPVRWWRVLPVKFFGGMGTLGAGMVLGREGPMVQMGGNIGRMVLDIFHRPDAEARHTLLATGAAAGLAAAFNAPLAGILFIIEEMRTQFHYNLISIKAVFTGVIMSTIVFRIFNGEKSVIEVGQLTDAPVYTLWLYLLLGIIFGAVGPLFNRLVLGMQDVFARIHGGNTTRWVLLGGAIGGACGLLALWEPAAAGGGFGLIPIAAAGNFTVGMLLFIFIARVVTTVFCFSSGAPGGIFAPMLALGTLLGSAFGMACAAWFPQWHLQAGTFAIAGMGALLAASVRAPITGIVLVLEMTDNYQLILPMIITCLGATLLAQFLGGKPLYSTILARTLAKQEAERQAQADGRNT.

The Cytoplasmic portion of the chain corresponds to 1-30; the sequence is MKSQTIPTRRVRGFRRAAVIRQLLSRDKTP. The helical transmembrane segment at 31 to 67 threads the bilayer; that stretch reads LTILLLASLTGVLAGLAGVAFEKAVAWVTAHRIEGLA. Over 68–74 the chain is Periplasmic; it reads QVAHIPW. Residues 75–98 traverse the membrane as a helical segment; it reads LVWLLAFLFSALLAMVGYFLVRRF. The Cytoplasmic segment spans residues 99–106; sequence APEAGGSG. A Selectivity filter part_1 motif is present at residues 104-108; it reads GSGIP. A chloride-binding site is contributed by Ser-105. The helical intramembrane region spans 107-114; it reads IPEIEGAL. Over 115 to 121 the chain is Cytoplasmic; that stretch reads EELRPVR. The chain crosses the membrane as a helical span at residues 122 to 139; that stretch reads WWRVLPVKFFGGMGTLGA. The Periplasmic segment spans residues 140–145; the sequence is GMVLGR. Residues 144–148 carry the Selectivity filter part_2 motif; sequence GREGP. A helical membrane pass occupies residues 146–164; sequence EGPMVQMGGNIGRMVLDIF. Over 165–174 the chain is Cytoplasmic; the sequence is HRPDAEARHT. Intramembrane regions (helical) lie at residues 175-187 and 191-199; these read LLATGAAAGLAAA and PLAGILFII. Residues 200 to 212 are Cytoplasmic-facing; the sequence is EEMRTQFHYNLIS. The chain crosses the membrane as a helical span at residues 213-230; sequence IKAVFTGVIMSTIVFRIF. Residues 231-250 lie on the Periplasmic side of the membrane; it reads NGEKSVIEVGQLTDAPVYTL. Residues 251–279 traverse the membrane as a helical segment; the sequence is WLYLLLGIIFGAVGPLFNRLVLGMQDVFA. The Cytoplasmic portion of the chain corresponds to 280 to 285; the sequence is RIHGGN. The chain crosses the membrane as a helical span at residues 286–307; the sequence is TTRWVLLGGAIGGACGLLALWE. Residues 308 to 327 lie on the Periplasmic side of the membrane; that stretch reads PAAAGGGFGLIPIAAAGNFT. Residues 328–347 traverse the membrane as a helical segment; it reads VGMLLFIFIARVVTTVFCFS. Residues 348–352 are Cytoplasmic-facing; sequence SGAPG. A Selectivity filter part_3 motif is present at residues 353–357; sequence GIFAP. A helical transmembrane segment spans residues 353 to 374; that stretch reads GIFAPMLALGTLLGSAFGMACA. Chloride-binding residues include Ile-354 and Phe-355. Over 375–384 the chain is Periplasmic; that stretch reads AWFPQWHLQA. The segment at residues 385-399 is an intramembrane region (helical); the sequence is GTFAIAGMGALLAAS. Residues 400–402 constitute an intramembrane region (note=Loop between two helices); it reads VRA. Positions 403 to 414 form an intramembrane region, helical; that stretch reads PITGIVLVLEMT. The segment at residues 415-419 is an intramembrane region (note=Loop between two helices); it reads DNYQL. The chain crosses the membrane as a helical span at residues 420 to 436; sequence ILPMIITCLGATLLAQF. Residues 437-467 lie on the Cytoplasmic side of the membrane; sequence LGGKPLYSTILARTLAKQEAERQAQADGRNT. Tyr-443 is a chloride binding site.

This sequence belongs to the chloride channel (TC 2.A.49) family. ClcA subfamily. As to quaternary structure, homodimer.

It is found in the cell inner membrane. The enzyme catalyses 2 chloride(in) + H(+)(out) = 2 chloride(out) + H(+)(in). Functionally, proton-coupled chloride transporter. Functions as antiport system and exchanges two chloride ions for 1 proton. Probably acts as an electrical shunt for an outwardly-directed proton pump that is linked to amino acid decarboxylation, as part of the extreme acid resistance (XAR) response. The polypeptide is H(+)/Cl(-) exchange transporter ClcA (Cronobacter sakazakii (strain ATCC BAA-894) (Enterobacter sakazakii)).